The chain runs to 270 residues: Pyrroline-5-carboxylate reductase (270 aa).

It belongs to the pyrroline-5-carboxylate reductase family.

It localises to the cytoplasm. The catalysed reaction is L-proline + NADP(+) = (S)-1-pyrroline-5-carboxylate + NADPH + 2 H(+). It catalyses the reaction L-proline + NAD(+) = (S)-1-pyrroline-5-carboxylate + NADH + 2 H(+). Its pathway is amino-acid biosynthesis; L-proline biosynthesis; L-proline from L-glutamate 5-semialdehyde: step 1/1. Its function is as follows. Catalyzes the reduction of 1-pyrroline-5-carboxylate (PCA) to L-proline. This is Pyrroline-5-carboxylate reductase from Corynebacterium melassecola.